The primary structure comprises 320 residues: UDP-3-O-acyl-N-acetylglucosamine deacetylase (320 aa).

Residues His-92, His-251, and Asp-255 each contribute to the Zn(2+) site. Residue His-278 is the Proton donor of the active site.

This sequence belongs to the LpxC family. Zn(2+) is required as a cofactor.

The enzyme catalyses a UDP-3-O-[(3R)-3-hydroxyacyl]-N-acetyl-alpha-D-glucosamine + H2O = a UDP-3-O-[(3R)-3-hydroxyacyl]-alpha-D-glucosamine + acetate. Its pathway is glycolipid biosynthesis; lipid IV(A) biosynthesis; lipid IV(A) from (3R)-3-hydroxytetradecanoyl-[acyl-carrier-protein] and UDP-N-acetyl-alpha-D-glucosamine: step 2/6. Catalyzes the hydrolysis of UDP-3-O-myristoyl-N-acetylglucosamine to form UDP-3-O-myristoylglucosamine and acetate, the committed step in lipid A biosynthesis. This chain is UDP-3-O-acyl-N-acetylglucosamine deacetylase, found in Psychrobacter cryohalolentis (strain ATCC BAA-1226 / DSM 17306 / VKM B-2378 / K5).